We begin with the raw amino-acid sequence, 316 residues long: Acetyl-coenzyme A carboxylase carboxyl transferase subunit alpha (316 aa).

Positions 39-293 (RLQDKSKALT…RGELLTQLKM (255 aa)) constitute a CoA carboxyltransferase C-terminal domain.

Belongs to the AccA family. As to quaternary structure, acetyl-CoA carboxylase is a heterohexamer composed of biotin carboxyl carrier protein (AccB), biotin carboxylase (AccC) and two subunits each of ACCase subunit alpha (AccA) and ACCase subunit beta (AccD).

The protein localises to the cytoplasm. The catalysed reaction is N(6)-carboxybiotinyl-L-lysyl-[protein] + acetyl-CoA = N(6)-biotinyl-L-lysyl-[protein] + malonyl-CoA. It participates in lipid metabolism; malonyl-CoA biosynthesis; malonyl-CoA from acetyl-CoA: step 1/1. Functionally, component of the acetyl coenzyme A carboxylase (ACC) complex. First, biotin carboxylase catalyzes the carboxylation of biotin on its carrier protein (BCCP) and then the CO(2) group is transferred by the carboxyltransferase to acetyl-CoA to form malonyl-CoA. This Pseudomonas aeruginosa (strain LESB58) protein is Acetyl-coenzyme A carboxylase carboxyl transferase subunit alpha.